Here is a 107-residue protein sequence, read N- to C-terminus: Phosphoribosyl-ATP pyrophosphatase (107 aa).

The protein belongs to the PRA-PH family.

The protein localises to the cytoplasm. It catalyses the reaction 1-(5-phospho-beta-D-ribosyl)-ATP + H2O = 1-(5-phospho-beta-D-ribosyl)-5'-AMP + diphosphate + H(+). Its pathway is amino-acid biosynthesis; L-histidine biosynthesis; L-histidine from 5-phospho-alpha-D-ribose 1-diphosphate: step 2/9. This Bacillus anthracis (strain A0248) protein is Phosphoribosyl-ATP pyrophosphatase.